The sequence spans 375 residues: MEREGKSDPIPIDIILDILSRLSTNSIAKFGLASKFCGSILRGQDFIELFLITRPLSRPRLLFAVQNSDKWCLYSSPQSQFPDENHSLVVSADFHMELRRDMGQEIFGLVSGLLYFPNTRTGEVPVICNPSTGQYARLTQRSSMNNLSSLLGYDPIGKKYKVITPSSSHFDPENILTLGTGKVAWRSIRCLVDHYPESEGICINGVLYYMASNKFQFSGVKIASFNVRYETLKFLNADVDVTFCPALAKLINYKGKLCVLSCLWDNQIYPKPLRWKVLMLWLWVLEDAEKEEWLKREYTLPVNIVHGNVSVVGVTATGEIILSMDYTSESFFVYYFNPERNTLEKVEIQGFEGSEKNLSSRVYTFVDYAEDVKFI.

One can recognise an F-box domain in the interval 5–52 (GKSDPIPIDIILDILSRLSTNSIAKFGLASKFCGSILRGQDFIELFLI).

This Arabidopsis thaliana (Mouse-ear cress) protein is Putative F-box protein At5g52620.